The following is a 135-amino-acid chain: Large ribosomal subunit protein uL16c (135 aa).

The protein belongs to the universal ribosomal protein uL16 family. As to quaternary structure, part of the 50S ribosomal subunit.

The protein localises to the plastid. The protein resides in the chloroplast. The polypeptide is Large ribosomal subunit protein uL16c (Euglena gracilis).